Consider the following 321-residue polypeptide: GTP 3',8-cyclase (321 aa).

A Radical SAM core domain is found at 5–233; the sequence is SFNRVIDYIR…QGSSKIYTLE (229 aa). Residue Arg14 coordinates GTP. Residues Cys21 and Cys25 each coordinate [4Fe-4S] cluster. An S-adenosyl-L-methionine-binding site is contributed by Tyr27. Cys28 provides a ligand contact to [4Fe-4S] cluster. A GTP-binding site is contributed by Arg64. Gly68 provides a ligand contact to S-adenosyl-L-methionine. Ser95 serves as a coordination point for GTP. An S-adenosyl-L-methionine-binding site is contributed by Ser119. Lys155 serves as a coordination point for GTP. Residue Met189 participates in S-adenosyl-L-methionine binding. Residues Cys249 and Cys252 each coordinate [4Fe-4S] cluster. 254 to 256 contributes to the GTP binding site; that stretch reads RIR. Residue Cys266 participates in [4Fe-4S] cluster binding.

It belongs to the radical SAM superfamily. MoaA family. Monomer and homodimer. The cofactor is [4Fe-4S] cluster.

It carries out the reaction GTP + AH2 + S-adenosyl-L-methionine = (8S)-3',8-cyclo-7,8-dihydroguanosine 5'-triphosphate + 5'-deoxyadenosine + L-methionine + A + H(+). The protein operates within cofactor biosynthesis; molybdopterin biosynthesis. Its function is as follows. Catalyzes the cyclization of GTP to (8S)-3',8-cyclo-7,8-dihydroguanosine 5'-triphosphate. The polypeptide is GTP 3',8-cyclase (Helicobacter pylori (strain ATCC 700392 / 26695) (Campylobacter pylori)).